The primary structure comprises 385 residues: Cotranscriptional regulator ARB2A homolog (385 aa).

2 disordered regions span residues 1-65 and 220-239; these read MSDI…NGEE and EEQK…NGKL. Positions 52–62 are enriched in low complexity; the sequence is NNNNNNSNNSN. Basic and acidic residues predominate over residues 220-238; the sequence is EEQKEKAKEEEEKKDDNGK.

It belongs to the ARB2A family.

This chain is Cotranscriptional regulator ARB2A homolog, found in Dictyostelium discoideum (Social amoeba).